The sequence spans 368 residues: High affinity transport system protein p37 (368 aa).

Residues 1–25 (MLFKKFTWVIPSLFLTIISTSLLIS) form the signal peptide. A lipid anchor (N-palmitoyl cysteine) is attached at Cys26. Cys26 carries the S-diacylglycerol cysteine lipid modification.

Its subcellular location is the cell membrane. In terms of biological role, P37 is part of a high-affinity transport system. This chain is High affinity transport system protein p37 (p37), found in Mycoplasma genitalium (strain ATCC 33530 / DSM 19775 / NCTC 10195 / G37) (Mycoplasmoides genitalium).